Here is a 413-residue protein sequence, read N- to C-terminus: Argininosuccinate synthase (413 aa).

22–30 (AYSGGLDTS) contacts ATP. L-citrulline is bound by residues Tyr100 and Ser105. An ATP-binding site is contributed by Gly130. L-aspartate-binding residues include Thr132, Asn136, and Asp137. Asn136 is an L-citrulline binding site. Positions 140, 189, 198, 274, and 286 each coordinate L-citrulline.

Belongs to the argininosuccinate synthase family. Type 1 subfamily. In terms of assembly, homotetramer.

The protein localises to the cytoplasm. It carries out the reaction L-citrulline + L-aspartate + ATP = 2-(N(omega)-L-arginino)succinate + AMP + diphosphate + H(+). It functions in the pathway amino-acid biosynthesis; L-arginine biosynthesis; L-arginine from L-ornithine and carbamoyl phosphate: step 2/3. This chain is Argininosuccinate synthase, found in Endomicrobium trichonymphae.